A 367-amino-acid chain; its full sequence is 2'-5'-oligoadenylate synthase 1A (367 aa).

The segment at 14 to 61 (DKFIEDYLLPDTTFGADVKSAVNVVCDFLKERCFQGAAHPVRVSKVVK) is interaction with dsRNA. S64 contacts ATP. Mg(2+) contacts are provided by D76, D78, and D149. The interval 201–211 (QRPTKLKSLIR) is interaction with dsRNA. ATP-binding residues include R211, K214, and Q231. Residue C364 is the site of S-geranylgeranyl cysteine attachment.

The protein belongs to the 2-5A synthase family. In terms of assembly, monomer. Homotetramer. Interacts with OAS1D; the interaction inhibits OAS1A catalytic activity. Mg(2+) is required as a cofactor. In terms of processing, C-terminal prenylated. Expressed in oocytes and granulosa cells of ovary, in intestine, stomach, spleen and uterus (at protein level). Expressed at high levels in the digestive tract and lymphoid organs. Expressed in ovary and spleen.

It localises to the cytoplasm. The protein localises to the mitochondrion. The protein resides in the nucleus. Its subcellular location is the microsome. It is found in the endoplasmic reticulum. It carries out the reaction 3 ATP = 5'-triphosphoadenylyl-(2'-&gt;5')-adenylyl-(2'-&gt;5')-adenosine + 2 diphosphate. Produced as a latent enzyme which is activated by dsRNA generated during the course of viral infection. The dsRNA activator must be at least 15 nucleotides long, and no modification of the 2'-hydroxyl group is tolerated. ssRNA or dsDNA do not act as activators. In terms of biological role, interferon-induced, dsRNA-activated antiviral enzyme which plays a critical role in cellular innate antiviral response. In addition, it may also play a role in other cellular processes such as apoptosis, cell growth, differentiation and gene regulation. Synthesizes higher oligomers of 2'-5'-oligoadenylates (2-5A) from ATP which then bind to the inactive monomeric form of ribonuclease L (RNase L) leading to its dimerization and subsequent activation. Activation of RNase L leads to degradation of cellular as well as viral RNA, resulting in the inhibition of protein synthesis, thus terminating viral replication. Can mediate the antiviral effect via the classical RNase L-dependent pathway or an alternative antiviral pathway independent of RNase L. This chain is 2'-5'-oligoadenylate synthase 1A (Oas1a), found in Mus musculus (Mouse).